The primary structure comprises 185 residues: Ribosome-recycling factor (185 aa).

Belongs to the RRF family.

The protein resides in the cytoplasm. Responsible for the release of ribosomes from messenger RNA at the termination of protein biosynthesis. May increase the efficiency of translation by recycling ribosomes from one round of translation to another. This Pseudoalteromonas atlantica (strain T6c / ATCC BAA-1087) protein is Ribosome-recycling factor.